A 122-amino-acid polypeptide reads, in one-letter code: Large ribosomal subunit protein uL22 (122 aa).

The interval 102–122 (VAEGKEMKSSKSHKKNQAEGK) is disordered.

This sequence belongs to the universal ribosomal protein uL22 family. Part of the 50S ribosomal subunit.

This protein binds specifically to 23S rRNA; its binding is stimulated by other ribosomal proteins, e.g. L4, L17, and L20. It is important during the early stages of 50S assembly. It makes multiple contacts with different domains of the 23S rRNA in the assembled 50S subunit and ribosome. Functionally, the globular domain of the protein is located near the polypeptide exit tunnel on the outside of the subunit, while an extended beta-hairpin is found that lines the wall of the exit tunnel in the center of the 70S ribosome. This chain is Large ribosomal subunit protein uL22, found in Helicobacter pylori (strain G27).